The following is a 449-amino-acid chain: Tubulin alpha chain (449 aa).

Gln-11, Glu-71, Ser-140, Gly-144, Thr-145, Thr-179, Asn-206, and Asn-228 together coordinate GTP. Glu-71 is a binding site for Mg(2+). Glu-254 is a catalytic residue.

It belongs to the tubulin family. Dimer of alpha and beta chains. A typical microtubule is a hollow water-filled tube with an outer diameter of 25 nm and an inner diameter of 15 nM. Alpha-beta heterodimers associate head-to-tail to form protofilaments running lengthwise along the microtubule wall with the beta-tubulin subunit facing the microtubule plus end conferring a structural polarity. Microtubules usually have 13 protofilaments but different protofilament numbers can be found in some organisms and specialized cells. Mg(2+) serves as cofactor.

It localises to the cytoplasm. The protein resides in the cytoskeleton. It carries out the reaction GTP + H2O = GDP + phosphate + H(+). Tubulin is the major constituent of microtubules, a cylinder consisting of laterally associated linear protofilaments composed of alpha- and beta-tubulin heterodimers. Microtubules grow by the addition of GTP-tubulin dimers to the microtubule end, where a stabilizing cap forms. Below the cap, tubulin dimers are in GDP-bound state, owing to GTPase activity of alpha-tubulin. This Gibberella zeae (strain ATCC MYA-4620 / CBS 123657 / FGSC 9075 / NRRL 31084 / PH-1) (Wheat head blight fungus) protein is Tubulin alpha chain (TUB1).